The sequence spans 126 residues: uncharacterized protein (126 aa).

One can recognise an HTH hxlR-type domain in the interval 20–118; that stretch reads CPSREVLKHV…WIELNLPEVL (99 aa).

This is an uncharacterized protein from Escherichia coli (strain K12).